Reading from the N-terminus, the 177-residue chain is ATP synthase subunit delta (177 aa).

This sequence belongs to the ATPase delta chain family. As to quaternary structure, F-type ATPases have 2 components, F(1) - the catalytic core - and F(0) - the membrane proton channel. F(1) has five subunits: alpha(3), beta(3), gamma(1), delta(1), epsilon(1). F(0) has three main subunits: a(1), b(2) and c(10-14). The alpha and beta chains form an alternating ring which encloses part of the gamma chain. F(1) is attached to F(0) by a central stalk formed by the gamma and epsilon chains, while a peripheral stalk is formed by the delta and b chains.

It is found in the cell inner membrane. Functionally, f(1)F(0) ATP synthase produces ATP from ADP in the presence of a proton or sodium gradient. F-type ATPases consist of two structural domains, F(1) containing the extramembraneous catalytic core and F(0) containing the membrane proton channel, linked together by a central stalk and a peripheral stalk. During catalysis, ATP synthesis in the catalytic domain of F(1) is coupled via a rotary mechanism of the central stalk subunits to proton translocation. Its function is as follows. This protein is part of the stalk that links CF(0) to CF(1). It either transmits conformational changes from CF(0) to CF(1) or is implicated in proton conduction. This chain is ATP synthase subunit delta, found in Yersinia enterocolitica serotype O:8 / biotype 1B (strain NCTC 13174 / 8081).